The following is a 276-amino-acid chain: Undecaprenyl-diphosphatase 2 (276 aa).

Transmembrane regions (helical) follow at residues 1 to 21 (MSLW…LFPV), 44 to 64 (QLLP…LWYF), 87 to 107 (GHLM…GLLL), 114 to 134 (VFHD…LLWL), 150 to 170 (LTFK…IPGF), 190 to 210 (AAEF…LLEL), 222 to 242 (DALL…RFLM), and 251 to 271 (LASF…WFMF).

Belongs to the UppP family.

Its subcellular location is the cell inner membrane. The enzyme catalyses di-trans,octa-cis-undecaprenyl diphosphate + H2O = di-trans,octa-cis-undecaprenyl phosphate + phosphate + H(+). Catalyzes the dephosphorylation of undecaprenyl diphosphate (UPP). Confers resistance to bacitracin. This chain is Undecaprenyl-diphosphatase 2, found in Burkholderia thailandensis (strain ATCC 700388 / DSM 13276 / CCUG 48851 / CIP 106301 / E264).